A 206-amino-acid chain; its full sequence is Large ribosomal subunit protein uL4 (206 aa).

The segment at 46–77 (GTRAQKDREQVKHSTKKPFKQKGTGNARAGMT) is disordered.

It belongs to the universal ribosomal protein uL4 family. Part of the 50S ribosomal subunit.

In terms of biological role, one of the primary rRNA binding proteins, this protein initially binds near the 5'-end of the 23S rRNA. It is important during the early stages of 50S assembly. It makes multiple contacts with different domains of the 23S rRNA in the assembled 50S subunit and ribosome. Forms part of the polypeptide exit tunnel. The protein is Large ribosomal subunit protein uL4 of Acidovorax ebreus (strain TPSY) (Diaphorobacter sp. (strain TPSY)).